Reading from the N-terminus, the 650-residue chain is Transcription factor LHW (650 aa).

Disordered stretches follow at residues 381–417 and 431–470; these read LTKV…SSVY and LKRE…DRQM. The span at 384-397 shows a compositional bias: low complexity; sequence VSNSSVTTPSHSSP. Residues 451–458 carry the Nuclear localization signal motif; that stretch reads NRKRLKPG. One can recognise a bHLH domain in the interval 455–504; it reads LKPGENPRPRPKDRQMIQDRVKELREIIPNGAKCSIDALLERTIKHMLFL. Residues 456-470 are compositionally biased toward basic and acidic residues; it reads KPGENPRPRPKDRQM.

Belongs to the bHLH protein family. LHW subfamily. Homodimer. Can also interact with bHLH proteins. Expressed in both root and shoot meristems. Present in root tips.

It is found in the nucleus. Functionally, transcription activator that regulates root development; promotes the production of stele cells in roots. Coordinately controls the number of all vascular cell types by regulating the size of the pool of cells from which they arise. This is Transcription factor LHW (LHW) from Arabidopsis thaliana (Mouse-ear cress).